Reading from the N-terminus, the 89-residue chain is Small ribosomal subunit protein uS14B (89 aa).

A disordered region spans residues K38 to Y61. Basic and acidic residues predominate over residues L39–P58.

It belongs to the universal ribosomal protein uS14 family. In terms of assembly, part of the 30S ribosomal subunit. Contacts proteins S3 and S10.

Functionally, binds 16S rRNA, required for the assembly of 30S particles and may also be responsible for determining the conformation of the 16S rRNA at the A site. The sequence is that of Small ribosomal subunit protein uS14B from Enterococcus faecalis (strain ATCC 700802 / V583).